A 374-amino-acid polypeptide reads, in one-letter code: Negative elongation factor E (374 aa).

The stretch at 7–36 (GLSEEEEALQKKFNKLKKKKKALLALKKQS) forms a coiled coil. The span at 30–43 (LALKKQSSSSTASQ) shows a compositional bias: low complexity. The segment at 30–58 (LALKKQSSSSTASQGGVKRSLSEQPVVDT) is disordered. Serine 51 bears the Phosphoserine mark. Lysine 78 participates in a covalent cross-link: Glycyl lysine isopeptide (Lys-Gly) (interchain with G-Cter in SUMO1); alternate. Lysine 78 participates in a covalent cross-link: Glycyl lysine isopeptide (Lys-Gly) (interchain with G-Cter in SUMO2); alternate. The interval 79–252 (AETKNSGFKR…SDSFPERRAP (174 aa)) is disordered. Residue lysine 82 forms a Glycyl lysine isopeptide (Lys-Gly) (interchain with G-Cter in SUMO2) linkage. Residues 90 to 101 (RTLEGKLKDPEK) are compositionally biased toward basic and acidic residues. Residues serine 113 and serine 115 each carry the phosphoserine modification. Glutamate 122 is subject to PolyADP-ribosyl glutamic acid. Phosphoserine occurs at positions 131 and 139. Glutamate 151 is modified (polyADP-ribosyl glutamic acid). Serine 165 carries the post-translational modification Phosphoserine. A PolyADP-ribosyl glutamic acid modification is found at glutamate 172. Serine 179, serine 181, serine 185, and serine 187 each carry phosphoserine. A run of 27 repeats spans residues 184-185 (RS), 186-187 (RS), 188-189 (RD), 190-191 (RS), 192-193 (RE), 194-195 (RN), 196-197 (RD), 198-199 (RD), 200-201 (RD), 202-203 (RD), 204-205 (RE), 206-207 (RD), 208-209 (RE), 210-211 (RD), 212-213 (RD), 214-215 (RD), 216-217 (RD), 218-219 (RE), 220-221 (RD), 222-223 (RD), 224-225 (RD), 226-227 (RD), 228-229 (RD), 230-231 (RD), 232-233 (RE), 234-235 (RD), and 236-237 (RE). Residues 184–237 (RSRSRDRSRERNRDRDRDRDRERDRERDRDRDRDRERDRDRDRDRDRDRERDRE) are 27 X 2 AA approximate tandem repeats of R-[DSNE]. The span at 186-250 (RSRDRSRERN…RRSDSFPERR (65 aa)) shows a compositional bias: basic and acidic residues. Position 191 is a phosphoserine (serine 191). Residues serine 243 and serine 245 each carry the phosphoserine modification. One can recognise an RRM domain in the interval 256–326 (NTLYVYGEDM…VQLKVSIARK (71 aa)). Phosphothreonine occurs at positions 266 and 268. A phosphoserine mark is found at serine 275 and serine 347. Glutamate 368 carries the post-translational modification PolyADP-ribosyl glutamic acid.

This sequence belongs to the RRM NELF-E family. In terms of assembly, the NELF complex is composed of NELFA, NELFB, NELFCD and NELFE. Interacts with NELFB. Post-translationally, phosphorylated by the P-TEFb complex at sites next to its RNA recognition motif, promoting its release from chromatin. Sumoylated. In terms of processing, poly-ADP-ribosylated by PARP1, thereby preventing RNA-binding and relieving transcription pausing.

It localises to the nucleus. The protein resides in the chromosome. In terms of biological role, essential component of the NELF complex, a complex that negatively regulates the elongation of transcription by RNA polymerase II. The NELF complex, which acts via an association with the DSIF complex and causes transcriptional pausing, is counteracted by the P-TEFb kinase complex. Provides the strongest RNA binding activity of the NELF complex and may initially recruit the NELF complex to RNA. The sequence is that of Negative elongation factor E (NELFE) from Bos taurus (Bovine).